A 500-amino-acid polypeptide reads, in one-letter code: Protein nucleotidyltransferase YdiU (500 aa).

ATP is bound by residues glycine 96, glycine 98, arginine 99, lysine 119, aspartate 131, glycine 132, arginine 182, and arginine 189. Residue aspartate 258 is the Proton acceptor of the active site. The Mg(2+) site is built by asparagine 259 and aspartate 268. Aspartate 268 contributes to the ATP binding site.

The protein belongs to the SELO family. Mg(2+) is required as a cofactor. The cofactor is Mn(2+).

The enzyme catalyses L-seryl-[protein] + ATP = 3-O-(5'-adenylyl)-L-seryl-[protein] + diphosphate. It carries out the reaction L-threonyl-[protein] + ATP = 3-O-(5'-adenylyl)-L-threonyl-[protein] + diphosphate. The catalysed reaction is L-tyrosyl-[protein] + ATP = O-(5'-adenylyl)-L-tyrosyl-[protein] + diphosphate. It catalyses the reaction L-histidyl-[protein] + UTP = N(tele)-(5'-uridylyl)-L-histidyl-[protein] + diphosphate. The enzyme catalyses L-seryl-[protein] + UTP = O-(5'-uridylyl)-L-seryl-[protein] + diphosphate. It carries out the reaction L-tyrosyl-[protein] + UTP = O-(5'-uridylyl)-L-tyrosyl-[protein] + diphosphate. Functionally, nucleotidyltransferase involved in the post-translational modification of proteins. It can catalyze the addition of adenosine monophosphate (AMP) or uridine monophosphate (UMP) to a protein, resulting in modifications known as AMPylation and UMPylation. The chain is Protein nucleotidyltransferase YdiU from Rhizobium etli (strain ATCC 51251 / DSM 11541 / JCM 21823 / NBRC 15573 / CFN 42).